Here is a 257-residue protein sequence, read N- to C-terminus: Imidazole glycerol phosphate synthase subunit HisF (257 aa).

Residues Asp-12 and Asp-131 contribute to the active site.

The protein belongs to the HisA/HisF family. Heterodimer of HisH and HisF.

The protein localises to the cytoplasm. The enzyme catalyses 5-[(5-phospho-1-deoxy-D-ribulos-1-ylimino)methylamino]-1-(5-phospho-beta-D-ribosyl)imidazole-4-carboxamide + L-glutamine = D-erythro-1-(imidazol-4-yl)glycerol 3-phosphate + 5-amino-1-(5-phospho-beta-D-ribosyl)imidazole-4-carboxamide + L-glutamate + H(+). It functions in the pathway amino-acid biosynthesis; L-histidine biosynthesis; L-histidine from 5-phospho-alpha-D-ribose 1-diphosphate: step 5/9. IGPS catalyzes the conversion of PRFAR and glutamine to IGP, AICAR and glutamate. The HisF subunit catalyzes the cyclization activity that produces IGP and AICAR from PRFAR using the ammonia provided by the HisH subunit. The chain is Imidazole glycerol phosphate synthase subunit HisF from Hydrogenovibrio crunogenus (strain DSM 25203 / XCL-2) (Thiomicrospira crunogena).